We begin with the raw amino-acid sequence, 282 residues long: BTB/POZ domain-containing protein At3g56230 (282 aa).

Over residues 40-50 (GSKEDRHDKSN) the composition is skewed to basic and acidic residues. Residues 40-66 (GSKEDRHDKSNHNSTINNGSSISSSPL) form a disordered region. Low complexity predominate over residues 51-64 (HNSTINNGSSISSS). In terms of domain architecture, BTB spans 111–181 (ADILLKPGDD…LYTGTLASDK (71 aa)).

It participates in protein modification; protein ubiquitination. May act as a substrate-specific adapter of an E3 ubiquitin-protein ligase complex (CUL3-RBX1-BTB) which mediates the ubiquitination and subsequent proteasomal degradation of target proteins. This chain is BTB/POZ domain-containing protein At3g56230, found in Arabidopsis thaliana (Mouse-ear cress).